The chain runs to 173 residues: ATP synthase subunit b (173 aa).

Residues 15–35 (LYVGDMLFYAILFIVLMALIA) traverse the membrane as a helical segment.

The protein belongs to the ATPase B chain family. F-type ATPases have 2 components, F(1) - the catalytic core - and F(0) - the membrane proton channel. F(1) has five subunits: alpha(3), beta(3), gamma(1), delta(1), epsilon(1). F(0) has three main subunits: a(1), b(2) and c(10-14). The alpha and beta chains form an alternating ring which encloses part of the gamma chain. F(1) is attached to F(0) by a central stalk formed by the gamma and epsilon chains, while a peripheral stalk is formed by the delta and b chains.

The protein resides in the cell membrane. F(1)F(0) ATP synthase produces ATP from ADP in the presence of a proton or sodium gradient. F-type ATPases consist of two structural domains, F(1) containing the extramembraneous catalytic core and F(0) containing the membrane proton channel, linked together by a central stalk and a peripheral stalk. During catalysis, ATP synthesis in the catalytic domain of F(1) is coupled via a rotary mechanism of the central stalk subunits to proton translocation. In terms of biological role, component of the F(0) channel, it forms part of the peripheral stalk, linking F(1) to F(0). The protein is ATP synthase subunit b of Pediococcus pentosaceus (strain ATCC 25745 / CCUG 21536 / LMG 10740 / 183-1w).